The primary structure comprises 400 residues: Homoserine O-acetyltransferase (400 aa).

An AB hydrolase-1 domain is found at 64 to 373 (NAILICHALT…TDRGHDAFLL (310 aa)). Serine 169 acts as the Nucleophile in catalysis. Arginine 239 provides a ligand contact to substrate. Catalysis depends on residues aspartate 335 and histidine 368. Aspartate 369 lines the substrate pocket.

It belongs to the AB hydrolase superfamily. MetX family. Homodimer.

Its subcellular location is the cytoplasm. It catalyses the reaction L-homoserine + acetyl-CoA = O-acetyl-L-homoserine + CoA. It participates in amino-acid biosynthesis; L-methionine biosynthesis via de novo pathway; O-acetyl-L-homoserine from L-homoserine: step 1/1. Transfers an acetyl group from acetyl-CoA to L-homoserine, forming acetyl-L-homoserine. This Bradyrhizobium diazoefficiens (strain JCM 10833 / BCRC 13528 / IAM 13628 / NBRC 14792 / USDA 110) protein is Homoserine O-acetyltransferase.